The primary structure comprises 232 residues: Ribose-5-phosphate isomerase A (232 aa).

Residues 29–32 (SGST), 86–89 (DGAD), and 99–102 (KGGG) contribute to the substrate site. Catalysis depends on E108, which acts as the Proton acceptor. K126 is a substrate binding site.

This sequence belongs to the ribose 5-phosphate isomerase family. Homodimer.

The enzyme catalyses aldehydo-D-ribose 5-phosphate = D-ribulose 5-phosphate. Its pathway is carbohydrate degradation; pentose phosphate pathway; D-ribose 5-phosphate from D-ribulose 5-phosphate (non-oxidative stage): step 1/1. In terms of biological role, catalyzes the reversible conversion of ribose-5-phosphate to ribulose 5-phosphate. This is Ribose-5-phosphate isomerase A from Synechococcus sp. (strain ATCC 27144 / PCC 6301 / SAUG 1402/1) (Anacystis nidulans).